The chain runs to 460 residues: ATP synthase subunit beta (460 aa).

150 to 157 (GGAGVGKT) contributes to the ATP binding site.

The protein belongs to the ATPase alpha/beta chains family. In terms of assembly, F-type ATPases have 2 components, CF(1) - the catalytic core - and CF(0) - the membrane proton channel. CF(1) has five subunits: alpha(3), beta(3), gamma(1), delta(1), epsilon(1). CF(0) has three main subunits: a(1), b(2) and c(9-12). The alpha and beta chains form an alternating ring which encloses part of the gamma chain. CF(1) is attached to CF(0) by a central stalk formed by the gamma and epsilon chains, while a peripheral stalk is formed by the delta and b chains.

It is found in the cell inner membrane. The catalysed reaction is ATP + H2O + 4 H(+)(in) = ADP + phosphate + 5 H(+)(out). In terms of biological role, produces ATP from ADP in the presence of a proton gradient across the membrane. The catalytic sites are hosted primarily by the beta subunits. The sequence is that of ATP synthase subunit beta from Salmonella gallinarum (strain 287/91 / NCTC 13346).